An 885-amino-acid chain; its full sequence is Alanine--tRNA ligase (885 aa).

Zn(2+) contacts are provided by histidine 564, histidine 568, cysteine 676, and histidine 680.

This sequence belongs to the class-II aminoacyl-tRNA synthetase family. Zn(2+) serves as cofactor.

It is found in the cytoplasm. It carries out the reaction tRNA(Ala) + L-alanine + ATP = L-alanyl-tRNA(Ala) + AMP + diphosphate. Catalyzes the attachment of alanine to tRNA(Ala) in a two-step reaction: alanine is first activated by ATP to form Ala-AMP and then transferred to the acceptor end of tRNA(Ala). Also edits incorrectly charged Ser-tRNA(Ala) and Gly-tRNA(Ala) via its editing domain. In Brucella abortus (strain 2308), this protein is Alanine--tRNA ligase.